A 495-amino-acid polypeptide reads, in one-letter code: uncharacterized protein (495 aa).

The protein resides in the cytoplasm. It localises to the nucleus. This is an uncharacterized protein from Saccharomyces cerevisiae (strain ATCC 204508 / S288c) (Baker's yeast).